Reading from the N-terminus, the 1938-residue chain is Myosin-1 (1938 aa).

The disordered stretch occupies residues 1–27; that stretch reads MSLEHEKDPGWQYLKRSREQQLADQSR. Residues 16–27 are compositionally biased toward basic and acidic residues; sequence RSREQQLADQSR. Positions 30–80 constitute a Myosin N-terminal SH3-like domain; that stretch reads DSKKNVWIPDAEEGYIEGVIKGPGPKADTVIVTAGGKDVTLKKDIVQEVNP. Residues 84–785 enclose the Myosin motor domain; that stretch reads EKTEDMSNLT…VVAHIEDLRD (702 aa). Lysine 128 carries the post-translational modification N6,N6,N6-trimethyllysine. 177–184 provides a ligand contact to ATP; the sequence is GESGAGKT. Actin-binding stretches follow at residues 660–682 and 764–778; these read LNKLMTMLHKTHPHFIRCIIPNE and RIGHTKVFFKAGVVA. The interval 846 to 1170 is alpha-helical tailpiece (short S2); the sequence is QLKCGKMAEE…NKQLEIQQDN (325 aa). The rodlike tail (S2 and LMM domains) stretch occupies residues 846 to 1938; the sequence is QLKCGKMAEE…GQVVRSATNK (1093 aa). Residues 846–1938 are a coiled coil; sequence QLKCGKMAEE…GQVVRSATNK (1093 aa). A disordered region spans residues 919–951; the sequence is RQEVEKSLNDANDRLSEHEEKNADLEKQRRKAQ. Residues 920 to 951 show a composition bias toward basic and acidic residues; that stretch reads QEVEKSLNDANDRLSEHEEKNADLEKQRRKAQ. A light meromyosin (LMM) region spans residues 1171 to 1938; the sequence is NKKKDSEIIK…GQVVRSATNK (768 aa).

It belongs to the TRAFAC class myosin-kinesin ATPase superfamily. Myosin family. Muscle myosin is a hexameric protein that consists of 2 heavy chain subunits (MHC), 2 alkali light chain subunits (MLC) and 2 regulatory light chain subunits (MLC-2). Interacts with itr-1 (via c-terminal coiled coil domain). Found exclusively in the pharyngeal muscle.

The protein localises to the cytoplasm. Its subcellular location is the myofibril. Muscle contraction. The chain is Myosin-1 from Caenorhabditis elegans.